The sequence spans 249 residues: Ribosomal RNA small subunit methyltransferase G (249 aa).

S-adenosyl-L-methionine-binding positions include G88, F93, 111 to 113, 139 to 140, and R158; these read DAT and AE.

This sequence belongs to the methyltransferase superfamily. RNA methyltransferase RsmG family.

It is found in the cytoplasm. Its function is as follows. Specifically methylates the N7 position of a guanine in 16S rRNA. In Thermus thermophilus (strain ATCC BAA-163 / DSM 7039 / HB27), this protein is Ribosomal RNA small subunit methyltransferase G.